The primary structure comprises 317 residues: 2,3-dihydroxyphenylpropionate/2,3-dihydroxicinnamic acid 1,2-dioxygenase 2 (317 aa).

The active-site Proton donor is the H115. H179 (proton acceptor) is an active-site residue.

This sequence belongs to the LigB/MhpB extradiol dioxygenase family. Homotetramer. The cofactor is Fe(2+).

The catalysed reaction is 3-(2,3-dihydroxyphenyl)propanoate + O2 = (2Z,4E)-2-hydroxy-6-oxonona-2,4-dienedioate + H(+). It carries out the reaction (2E)-3-(2,3-dihydroxyphenyl)prop-2-enoate + O2 = (2Z,4E,7E)-2-hydroxy-6-oxonona-2,4,7-trienedioate + H(+). It participates in aromatic compound metabolism; 3-phenylpropanoate degradation. Its function is as follows. Catalyzes the non-heme iron(II)-dependent oxidative cleavage of 2,3-dihydroxyphenylpropionic acid and 2,3-dihydroxicinnamic acid into 2-hydroxy-6-ketononadienedioate and 2-hydroxy-6-ketononatrienedioate, respectively. The polypeptide is 2,3-dihydroxyphenylpropionate/2,3-dihydroxicinnamic acid 1,2-dioxygenase 2 (Dechloromonas aromatica (strain RCB)).